A 78-amino-acid polypeptide reads, in one-letter code: Major outer membrane lipoprotein Lpp 1 (78 aa).

A signal peptide spans 1 to 20; the sequence is MNRTKLVLGAVILGSTLLAG. Cys-21 carries the N-palmitoyl cysteine lipid modification. Residue Cys-21 is the site of S-diacylglycerol cysteine attachment. 2 repeats span residues 24–34 and 38–48; these read NAKIDQLSSDV and NAKVDQLSNDV. Residues 27–75 adopt a coiled-coil conformation; it reads IDQLSSDVQTLNAKVDQLSNDVNAMRSDVQAAKDDAARANQRLDNQATK. The tract at residues 56-78 is disordered; it reads QAAKDDAARANQRLDNQATKYRK. Polar residues predominate over residues 68–78; the sequence is RLDNQATKYRK. At Lys-78 the chain carries N6-murein peptidoglycan lysine.

This sequence belongs to the Lpp family. In terms of assembly, homotrimer.

Its subcellular location is the cell outer membrane. It is found in the secreted. The protein localises to the cell wall. In terms of biological role, a highly abundant outer membrane lipoprotein that controls the distance between the inner and outer membranes. The only protein known to be covalently linked to the peptidoglycan network (PGN). Also non-covalently binds the PGN. The link between the cell outer membrane and PGN contributes to maintenance of the structural and functional integrity of the cell envelope, and maintains the correct distance between the PGN and the outer membrane. The polypeptide is Major outer membrane lipoprotein Lpp 1 (Salmonella paratyphi A (strain ATCC 9150 / SARB42)).